The sequence spans 494 residues: Guanosine-5'-triphosphate,3'-diphosphate pyrophosphatase (494 aa).

It belongs to the GppA/Ppx family. GppA subfamily.

It catalyses the reaction guanosine 3'-diphosphate 5'-triphosphate + H2O = guanosine 3',5'-bis(diphosphate) + phosphate + H(+). Its pathway is purine metabolism; ppGpp biosynthesis; ppGpp from GTP: step 2/2. Functionally, catalyzes the conversion of pppGpp to ppGpp. Guanosine pentaphosphate (pppGpp) is a cytoplasmic signaling molecule which together with ppGpp controls the 'stringent response', an adaptive process that allows bacteria to respond to amino acid starvation, resulting in the coordinated regulation of numerous cellular activities. The sequence is that of Guanosine-5'-triphosphate,3'-diphosphate pyrophosphatase from Shigella dysenteriae serotype 1 (strain Sd197).